Here is a 528-residue protein sequence, read N- to C-terminus: Glutamate--cysteine ligase (528 aa).

The protein belongs to the glutamate--cysteine ligase type 1 family. Type 1 subfamily.

The catalysed reaction is L-cysteine + L-glutamate + ATP = gamma-L-glutamyl-L-cysteine + ADP + phosphate + H(+). It functions in the pathway sulfur metabolism; glutathione biosynthesis; glutathione from L-cysteine and L-glutamate: step 1/2. This is Glutamate--cysteine ligase from Janthinobacterium sp. (strain Marseille) (Minibacterium massiliensis).